The sequence spans 248 residues: MGQKIHPHGLRLGITSDWKTHWYADKDYANYVAEDIKIREYLEKGLDRAGIADVVIERTRDRVRVDIHTARPGIVIGRRGAEADRIRRELEKLTGKMVALNILEVKQVDANATLVAQSVAEQLVNRVAFRRAMRKAIQSAMRQPQVKGIKILLSGRLGGAEMSRTERYHEGRVPLHTLRAEIDYGTAEAHTTFGRIGIKVWIYKGDVVGGVRESELNAPAQGRGRGDRNGRPRRGGQRRQRAQQKQEG.

Residues 38–106 (IREYLEKGLD…MVALNILEVK (69 aa)) enclose the KH type-2 domain. A disordered region spans residues 214–248 (SELNAPAQGRGRGDRNGRPRRGGQRRQRAQQKQEG). A compositionally biased stretch (basic residues) spans 231–242 (RPRRGGQRRQRA).

It belongs to the universal ribosomal protein uS3 family. In terms of assembly, part of the 30S ribosomal subunit. Forms a tight complex with proteins S10 and S14.

In terms of biological role, binds the lower part of the 30S subunit head. Binds mRNA in the 70S ribosome, positioning it for translation. The chain is Small ribosomal subunit protein uS3 from Corynebacterium aurimucosum (strain ATCC 700975 / DSM 44827 / CIP 107346 / CN-1) (Corynebacterium nigricans).